The following is a 228-amino-acid chain: LexA repressor (228 aa).

Positions 26–46 (FDEMKDALDLRSKSGIHRLIT) form a DNA-binding region, H-T-H motif. Catalysis depends on for autocatalytic cleavage activity residues Ser149 and Lys187.

This sequence belongs to the peptidase S24 family. Homodimer.

It carries out the reaction Hydrolysis of Ala-|-Gly bond in repressor LexA.. Its function is as follows. Represses a number of genes involved in the response to DNA damage (SOS response), including recA and lexA. Has been shown to bind to the direct repeat sequence 5'-GTT-N(7)-GTTC-3'. In the presence of single-stranded DNA, RecA interacts with LexA causing an autocatalytic cleavage which disrupts the DNA-binding part of LexA, leading to derepression of the SOS regulon and eventually DNA repair. The sequence is that of LexA repressor from Cereibacter sphaeroides (strain ATCC 17023 / DSM 158 / JCM 6121 / CCUG 31486 / LMG 2827 / NBRC 12203 / NCIMB 8253 / ATH 2.4.1.) (Rhodobacter sphaeroides).